Consider the following 603-residue polypeptide: Shugoshin (603 aa).

Positions 11–74 (HIQELQNILD…NVQLRSQVSL (64 aa)) form a coiled coil. Disordered stretches follow at residues 112–164 (ESLP…RSST) and 201–227 (NEIDTNNVNNDNLLSPIPHKKRKSNRR). Composition is skewed to low complexity over residues 146–157 (SVSTGSAHSTSS) and 201–214 (NEIDTNNVNNDNLL). Positions 218–227 (PHKKRKSNRR) are enriched in basic residues. Positions 304 to 325 (KQDILDETEKRDTAVNQKKKLE) form a coiled coil. Residues 331 to 399 (PVEELSSSKN…ESVDFDRPRR (69 aa)) form a disordered region. The segment covering 362–376 (KVKHSMKSRKPKKNK) has biased composition (basic residues). A coiled-coil region spans residues 431-451 (NIQDLQVKYKKSKKVLEKELK). Over residues 455-467 (KAMKSPKKNEKTF) the composition is skewed to basic and acidic residues. Disordered stretches follow at residues 455 to 519 (KAMK…HSSF) and 583 to 603 (HNDTNKSSPKTYRSRSRKNKA). Residues 483–512 (RPSSTHSTSSVDAECSHNNSHSENINSSIN) show a composition bias toward low complexity. A compositionally biased stretch (polar residues) spans 583–593 (HNDTNKSSPKT). The segment covering 594-603 (YRSRSRKNKA) has biased composition (basic residues).

The protein belongs to the shugoshin family.

Its subcellular location is the nucleus. It is found in the chromosome. The protein localises to the centromere. Functionally, plays a central role in chromosome cohesion during cell division by preventing premature dissociation of cohesin complex from centromeres after prophase, when most of cohesin complex dissociates from chromosomes arms. This is Shugoshin (SGO1) from Candida glabrata (strain ATCC 2001 / BCRC 20586 / JCM 3761 / NBRC 0622 / NRRL Y-65 / CBS 138) (Yeast).